A 188-amino-acid polypeptide reads, in one-letter code: Elongation factor P (188 aa).

Belongs to the elongation factor P family.

Its subcellular location is the cytoplasm. The protein operates within protein biosynthesis; polypeptide chain elongation. Its function is as follows. Involved in peptide bond synthesis. Stimulates efficient translation and peptide-bond synthesis on native or reconstituted 70S ribosomes in vitro. Probably functions indirectly by altering the affinity of the ribosome for aminoacyl-tRNA, thus increasing their reactivity as acceptors for peptidyl transferase. The chain is Elongation factor P from Rickettsia bellii (strain OSU 85-389).